The chain runs to 1116 residues: Error-prone DNA polymerase 1 (1116 aa).

It belongs to the DNA polymerase type-C family. DnaE2 subfamily.

It is found in the cytoplasm. It catalyses the reaction DNA(n) + a 2'-deoxyribonucleoside 5'-triphosphate = DNA(n+1) + diphosphate. In terms of biological role, DNA polymerase involved in damage-induced mutagenesis and translesion synthesis (TLS). It is not the major replicative DNA polymerase. This is Error-prone DNA polymerase 1 from Rhizobium meliloti (strain 1021) (Ensifer meliloti).